Here is a 201-residue protein sequence, read N- to C-terminus: Thiamine transporter ThiT (201 aa).

6 consecutive transmembrane segments (helical) span residues 7–27, 29–49, 53–73, 85–105, 124–144, and 170–190; these read LVVI…TYIP, TTGV…VLAM, LVPA…LRGI, ILEY…FASF, GIII…VVFW, and TVLT…LFVA.

The protein belongs to the vitamin uptake transporter (VUT/ECF) (TC 2.A.88) family. Thiamine transporter subfamily. In terms of assembly, in Lactococcus lactis subsp. cremoris (strain NZ9000) forms a stable energy-coupling factor (ECF) transporter complex probably composed of a membrane-embedded substrate-binding protein (S component), two ATP-binding proteins (A components) and a transmembrane protein (T component).

The protein resides in the cell membrane. Thiamine-binding protein that interacts with the energy-coupling factor (ECF) ABC-transporter complex. Unlike classic ABC transporters this ECF transporter provides the energy necessary to transport a number of different substrates. The substrates themselves are bound by transmembrane, not extracytoplasmic soluble proteins and transport it into cells. Binds thiamine with a dissociation constant of 0.5 nM. Upon coexpression with its energy-coupling factor (ECF) ABC-transporter complex EcfA1A2T in Lactococcus lactis subsp. cremoris (strain NZ9000) allows thiamine uptake; uptake requires both ThiT and EcfA1A2T. This Lacticaseibacillus paracasei (strain ATCC 334 / BCRC 17002 / CCUG 31169 / CIP 107868 / KCTC 3260 / NRRL B-441) (Lactobacillus paracasei) protein is Thiamine transporter ThiT (thiT).